The following is a 459-amino-acid chain: Cyclic GMP-AMP synthase-like receptor 2 (459 aa).

ATP-binding positions include Ser-68 and 79–81; that span reads EFD. Mg(2+)-binding residues include Glu-79, Asp-81, and Asp-199. GTP-binding positions include Asp-199 and 248 to 255; that span reads RSSFYAVE. An ATP-binding site is contributed by 252–255; that stretch reads YAVE. Residue His-263 participates in Zn(2+) binding. Residues Lys-274 and 288–292 contribute to the ATP site; that span reads SYYIK.

This sequence belongs to the mab-21 family. It depends on Mg(2+) as a cofactor. The cofactor is Mn(2+).

It catalyses the reaction GTP + ATP = 3',2'-cGAMP + 2 diphosphate. The catalysed reaction is GTP + ATP = 2',3'-cGAMP + 2 diphosphate. It carries out the reaction GTP + ATP = pppGp(2'-5')A + diphosphate. The enzyme catalyses pppA(2'-5')pG = 3',2'-cGAMP + diphosphate. It catalyses the reaction pppGp(2'-5')A = 2',3'-cGAMP + diphosphate. The enzyme activity is specifically activated by some nucleic acid. Its function is as follows. Nucleotidyltransferase that catalyzes the formation of cyclic GMP-AMP from ATP and GTP and plays a key role in antiviral innate immunity. Directly binds some unknown nucleic acid, activating the nucleotidyltransferase activity, leading to synthesis of both 3',2'-cGAMP and 2',3'-cGAMP second messengers. 3',2'-cGAMP and 2',3'-cGAMP bind to and activate Sting, thereby triggering the antiviral immune response via activation of the NF-kappa-B transcription factor Rel (Relish). The protein is Cyclic GMP-AMP synthase-like receptor 2 of Drosophila melanogaster (Fruit fly).